A 263-amino-acid polypeptide reads, in one-letter code: Oxidoreductase UcpA (263 aa).

10 to 32 (LITGALQGIGEGIARTFARHGAN) is an NAD(+) binding site. Serine 141 serves as a coordination point for substrate. Tyrosine 155 acts as the Proton acceptor in catalysis.

It belongs to the short-chain dehydrogenases/reductases (SDR) family.

The chain is Oxidoreductase UcpA (ucpA) from Escherichia coli (strain K12).